We begin with the raw amino-acid sequence, 548 residues long: MALHVPKAPGFAQMLKEGAKHFSGLEEAVYRNIQACKELAQTTRTAYGPNGMNKMVINHLEKLFVTNDAATILRELEVQHPAAKMIVMASHMQEQEVGDGTNFVLVFAGALLELAEELLRLGLSVSEVIEGYEIACKKAHEILPDLVCCSAKNLRDVDEVSSLLHTSVMSKQYGNEVFLAKLIAQACVSIFPDSGHFNVDNIRVCKILGSGVHSSSVLHGMVFKKETEGDVTSVKDAKIAVYSCPFDGMITETKGTVLIKSAEELMNFSKGEENLMDAQVKAIADTGANVVVTGGRVADMALHYANKYNIMLVRLNSKWDLRRLCKTVGATALPRLNPPVLEEMGHCDSVYLSEVGDTQVVVFKHEKEDGAISTIVLRGSTDNLMDDIERAVDDGVNTFKVLTRDKRLVPGGGATEIELAKQITSYGETCPGLEQYAIKKFAEAFEAIPRALAENSGVKANEVISKLYAVHQEGNKNVGLDIEAEVPAVKDMLEAGVLDTYLGKYWAIKLATNAAVTVLRVDQIIMAKPAGGPKPPSGKKDWDEDQND.

Alanine 2 carries the N-acetylalanine modification. At serine 23 the chain carries Phosphoserine. Tyrosine 30 bears the Phosphotyrosine mark. 2 residues coordinate ADP: tyrosine 47 and glycine 48. Aspartate 99 is a binding site for Mg(2+). ADP contacts are provided by glycine 100, threonine 101, asparagine 102, and phenylalanine 103. ATP contacts are provided by glycine 100, threonine 101, and asparagine 102. Residue serine 162 is modified to Phosphoserine. ADP is bound by residues methionine 169, serine 170, and lysine 171. ATP contacts are provided by serine 170 and lysine 171. Residues lysine 224, lysine 254, and lysine 260 each participate in a glycyl lysine isopeptide (Lys-Gly) (interchain with G-Cter in SUMO2) cross-link. Phosphoserine occurs at positions 269 and 317. 2 positions are modified to N6-acetyllysine: lysine 318 and lysine 400. Glycine 412 is an ADP binding site. Glycine 412 serves as a coordination point for ATP. A Glycyl lysine isopeptide (Lys-Gly) (interchain with G-Cter in SUMO1) cross-link involves residue lysine 459. N6-acetyllysine is present on lysine 466. Aspartate 499 is an ADP binding site. ATP is bound by residues aspartate 499 and lysine 504. Tyrosine 505 carries the post-translational modification Phosphotyrosine. Residues 529-548 (PAGGPKPPSGKKDWDEDQND) are disordered. Lysine 534 participates in a covalent cross-link: Glycyl lysine isopeptide (Lys-Gly) (interchain with G-Cter in SUMO2). Serine 537 carries the phosphoserine modification. A Glycyl lysine isopeptide (Lys-Gly) (interchain with G-Cter in SUMO2) cross-link involves residue lysine 539.

It belongs to the TCP-1 chaperonin family. As to quaternary structure, component of the chaperonin-containing T-complex (TRiC), a hexadecamer composed of two identical back-to-back stacked rings enclosing a protein folding chamber. Each ring is made up of eight different subunits: TCP1/CCT1, CCT2, CCT3, CCT4, CCT5, CCT6A/CCT6, CCT7, CCT8. Interacts with PACRG. Interacts with DNAAF4. Interacts with synaptic plasticity regulator PANTS.

Its subcellular location is the cytoplasm. The protein resides in the cytoskeleton. The protein localises to the microtubule organizing center. It is found in the centrosome. It localises to the cilium basal body. The enzyme catalyses ATP + H2O = ADP + phosphate + H(+). Its function is as follows. Component of the chaperonin-containing T-complex (TRiC), a molecular chaperone complex that assists the folding of actin, tubulin and other proteins upon ATP hydrolysis. The TRiC complex mediates the folding of WRAP53/TCAB1, thereby regulating telomere maintenance. As part of the TRiC complex may play a role in the assembly of BBSome, a complex involved in ciliogenesis regulating transports vesicles to the cilia. This is T-complex protein 1 subunit theta (CCT8) from Bos taurus (Bovine).